The primary structure comprises 270 residues: Ribonuclease HII (270 aa).

The region spanning 84 to 270 (RYIAGVDEVG…HRNSFLTKLL (187 aa)) is the RNase H type-2 domain. A divalent metal cation is bound by residues Asp-90, Glu-91, and Asp-186.

Belongs to the RNase HII family. The cofactor is Mn(2+). Requires Mg(2+) as cofactor.

It is found in the cytoplasm. It carries out the reaction Endonucleolytic cleavage to 5'-phosphomonoester.. In terms of biological role, endonuclease that specifically degrades the RNA of RNA-DNA hybrids. The sequence is that of Ribonuclease HII from Clostridium beijerinckii (strain ATCC 51743 / NCIMB 8052) (Clostridium acetobutylicum).